Reading from the N-terminus, the 187-residue chain is Probable RNA 2'-phosphotransferase (187 aa).

Belongs to the KptA/TPT1 family.

Functionally, removes the 2'-phosphate from RNA via an intermediate in which the phosphate is ADP-ribosylated by NAD followed by a presumed transesterification to release the RNA and generate ADP-ribose 1''-2''-cyclic phosphate (APPR&gt;P). May function as an ADP-ribosylase. This is Probable RNA 2'-phosphotransferase from Pseudomonas syringae pv. tomato (strain ATCC BAA-871 / DC3000).